Consider the following 863-residue polypeptide: MHEKYVPSDVESAAQGQWRAIDAYKTTEVTDKPKFYCVSMLPYPSGKLHMGHVRNYTINDVMYRYLRMNGYNVLMPMGWDAFGMPAENAAMANNVPPAKWTYDNIAYMKKQMQSMGLAIDWSREVATCSPDYYKWNQWLFLKMLEKGIAYKKTGTVNWDPVDQTVLANEQVIDGRGWRSGALVEKREIPMYYMRITQYADELLNDLEGLGWPERVKIMQQNWIGKSFGVNFGFPYEIDGEQKLLRVFTTRADTIMGVTFCAIAAEHPLATRLAKDKPELQAFIEECKRGGVAEADVATMEKKGMATGFTVTHPLTQEQVEVWIGNYVLMSYGEGAVMGVPAHDERDFAFVKKYGLPVRQVVAVEGKEFSTEAWQEWYGEKTGTLINSGKYDGLNYEQAVDRIAADLKELGLGDKQITWRLRDWGVSRQRYWGTPIPIIHCPTCGDVPVPEKDLPVVLPEDLVPDGTGNPLARSEAFVNCTCPTCGGAAKRETDTMDTFVDSSWYFYRYASPGAKTMVDERTDYWAPMDQYIGGIEHAILHLLYSRFWAKVMRDLGLIRFGEPAKNLLTQGMVLNETYYRENEAGKKTWYNPAEVTVSFDDKGRPVGAILNEDGQPVVLGGVEKMSKSKNNGVDPQLLIDQHGADTARLFVMFAAPPEQSLEWSGSGVEGASRFLRRVWSFSQANEAALRQGGTFDAAQLSDVEKVLRREIYSVLKQADFDYQRLQYNTVVSAAMKMLNALDSAKGARPAVLRETCSVMLRVLYPVVPHLTFQLWQELGYADELGSLLDAPWPKVDEKALEQSEIELVLQVNGKVRGAITVAKDASREAIEQLAAAHEMVAKFSEGKAPKKIVVVPGRLVNVVV.

The short motif at 42-52 (PYPSGKLHMGH) is the 'HIGH' region element. Positions 623-627 (KMSKS) match the 'KMSKS' region motif. Lys626 is an ATP binding site.

It belongs to the class-I aminoacyl-tRNA synthetase family.

Its subcellular location is the cytoplasm. It carries out the reaction tRNA(Leu) + L-leucine + ATP = L-leucyl-tRNA(Leu) + AMP + diphosphate. This is Leucine--tRNA ligase from Paraburkholderia xenovorans (strain LB400).